A 391-amino-acid chain; its full sequence is uncharacterized protein (391 aa).

This is an uncharacterized protein from Methanocaldococcus jannaschii (strain ATCC 43067 / DSM 2661 / JAL-1 / JCM 10045 / NBRC 100440) (Methanococcus jannaschii).